We begin with the raw amino-acid sequence, 481 residues long: Glutamate--tRNA ligase (481 aa).

The 'HIGH' region signature appears at 11–21; the sequence is PSPTGLLHIGN. A 'KMSKS' region motif is present at residues 255-259; sequence KLSKR. Lysine 258 contributes to the ATP binding site.

It belongs to the class-I aminoacyl-tRNA synthetase family. Glutamate--tRNA ligase type 1 subfamily. As to quaternary structure, monomer.

It is found in the cytoplasm. The catalysed reaction is tRNA(Glu) + L-glutamate + ATP = L-glutamyl-tRNA(Glu) + AMP + diphosphate. In terms of biological role, catalyzes the attachment of glutamate to tRNA(Glu) in a two-step reaction: glutamate is first activated by ATP to form Glu-AMP and then transferred to the acceptor end of tRNA(Glu). This Streptococcus pyogenes serotype M4 (strain MGAS10750) protein is Glutamate--tRNA ligase.